A 352-amino-acid polypeptide reads, in one-letter code: Ni-sirohydrochlorin a,c-diamide reductive cyclase complex, component CfbD (352 aa).

Belongs to the NifD/NifK/NifE/NifN family. Homodimer or monomer. The Ni-sirohydrochlorin a,c-diamide reductive cyclase complex is composed of a NifH homolog component CfbC and a NifD homolog component CfbD. It depends on [4Fe-4S] cluster as a cofactor.

It carries out the reaction Ni-sirohydrochlorin a,c-diamide + 3 AH2 + ATP + H2O = 15,17(3)-seco-F430-17(3)-acid + 3 A + ADP + phosphate. Its function is as follows. Involved in the biosynthesis of the unique nickel-containing tetrapyrrole coenzyme F430, the prosthetic group of methyl-coenzyme M reductase (MCR), which plays a key role in methanogenesis and anaerobic methane oxidation. Catalyzes both the six-electron reduction of the tetrahydroporphyrin ring system and the gamma-lactamization of the c-acetamide side chain of Ni-sirohydrochlorin a,c-diamide to yield 15,17(3)-seco-F430-17(3)-acid (seco-F430), the last intermediate in the biosynthesis of the coenzyme F430. The chain is Ni-sirohydrochlorin a,c-diamide reductive cyclase complex, component CfbD from Methanocaldococcus jannaschii (strain ATCC 43067 / DSM 2661 / JAL-1 / JCM 10045 / NBRC 100440) (Methanococcus jannaschii).